We begin with the raw amino-acid sequence, 417 residues long: Serine hydroxymethyltransferase (417 aa).

(6S)-5,6,7,8-tetrahydrofolate-binding positions include leucine 121 and 125-127 (GHL). Lysine 229 is subject to N6-(pyridoxal phosphate)lysine. 355–357 (SPF) serves as a coordination point for (6S)-5,6,7,8-tetrahydrofolate.

It belongs to the SHMT family. Homodimer. Requires pyridoxal 5'-phosphate as cofactor.

The protein resides in the cytoplasm. It carries out the reaction (6R)-5,10-methylene-5,6,7,8-tetrahydrofolate + glycine + H2O = (6S)-5,6,7,8-tetrahydrofolate + L-serine. The protein operates within one-carbon metabolism; tetrahydrofolate interconversion. It functions in the pathway amino-acid biosynthesis; glycine biosynthesis; glycine from L-serine: step 1/1. Catalyzes the reversible interconversion of serine and glycine with tetrahydrofolate (THF) serving as the one-carbon carrier. This reaction serves as the major source of one-carbon groups required for the biosynthesis of purines, thymidylate, methionine, and other important biomolecules. Also exhibits THF-independent aldolase activity toward beta-hydroxyamino acids, producing glycine and aldehydes, via a retro-aldol mechanism. The chain is Serine hydroxymethyltransferase from Shewanella baltica (strain OS195).